Reading from the N-terminus, the 497-residue chain is Acetyl-coenzyme A carboxylase carboxyl transferase subunit beta, chloroplastic (497 aa).

A disordered region spans residues 30–50 (GPVENTTVNEDPTRNDTDKNI). Over residues 40–50 (DPTRNDTDKNI) the composition is skewed to basic and acidic residues. One can recognise a CoA carboxyltransferase N-terminal domain in the interval 230–497 (VQCECENCYG…FFPLNQNSIK (268 aa)). Zn(2+)-binding residues include Cys-232, Cys-237, Cys-253, and Cys-256. The segment at 232 to 256 (CECENCYGVNYKKSLNSKMNICEQC) adopts a C4-type zinc-finger fold.

It belongs to the AccD/PCCB family. In terms of assembly, acetyl-CoA carboxylase is a heterohexamer composed of biotin carboxyl carrier protein, biotin carboxylase and 2 subunits each of ACCase subunit alpha and ACCase plastid-coded subunit beta (accD). The cofactor is Zn(2+).

The protein resides in the plastid. The protein localises to the chloroplast stroma. The enzyme catalyses N(6)-carboxybiotinyl-L-lysyl-[protein] + acetyl-CoA = N(6)-biotinyl-L-lysyl-[protein] + malonyl-CoA. The protein operates within lipid metabolism; malonyl-CoA biosynthesis; malonyl-CoA from acetyl-CoA: step 1/1. Component of the acetyl coenzyme A carboxylase (ACC) complex. Biotin carboxylase (BC) catalyzes the carboxylation of biotin on its carrier protein (BCCP) and then the CO(2) group is transferred by the transcarboxylase to acetyl-CoA to form malonyl-CoA. The polypeptide is Acetyl-coenzyme A carboxylase carboxyl transferase subunit beta, chloroplastic (Gossypium hirsutum (Upland cotton)).